A 247-amino-acid polypeptide reads, in one-letter code: Uridylate kinase (247 aa).

17-20 (KFSG) contacts ATP. Gly-59 lines the UMP pocket. ATP-binding residues include Gly-60 and Arg-64. UMP contacts are provided by residues Asp-79 and 140–147 (TGNPFFTT). Positions 167, 173, and 176 each coordinate ATP.

The protein belongs to the UMP kinase family. As to quaternary structure, homohexamer.

It is found in the cytoplasm. It carries out the reaction UMP + ATP = UDP + ADP. It participates in pyrimidine metabolism; CTP biosynthesis via de novo pathway; UDP from UMP (UMPK route): step 1/1. With respect to regulation, inhibited by UTP. Catalyzes the reversible phosphorylation of UMP to UDP. In Legionella pneumophila subsp. pneumophila (strain Philadelphia 1 / ATCC 33152 / DSM 7513), this protein is Uridylate kinase.